Reading from the N-terminus, the 330-residue chain is Peroxidase 55 (330 aa).

Residues 1–30 (MDIRSDDAKKPMMMWFLGMLLFSMVAESNA) form the signal peptide. Disulfide bonds link Cys41-Cys121, Cys74-Cys79, Cys127-Cys326, and Cys206-Cys238. The Proton acceptor role is filled by His72. 5 residues coordinate Ca(2+): Asp73, Val76, Gly78, Asp80, and Ser82. Pro169 provides a ligand contact to substrate. His199 contacts heme b. A Ca(2+)-binding site is contributed by Thr200. An N-linked (GlcNAc...) asparagine glycan is attached at Asn215. 3 residues coordinate Ca(2+): Asp250, Ser253, and Asp258.

The protein belongs to the peroxidase family. Classical plant (class III) peroxidase subfamily. Requires heme b as cofactor. Ca(2+) is required as a cofactor. Slightly expressed in roots.

The protein localises to the secreted. It carries out the reaction 2 a phenolic donor + H2O2 = 2 a phenolic radical donor + 2 H2O. Functionally, removal of H(2)O(2), oxidation of toxic reductants, biosynthesis and degradation of lignin, suberization, auxin catabolism, response to environmental stresses such as wounding, pathogen attack and oxidative stress. These functions might be dependent on each isozyme/isoform in each plant tissue. In Arabidopsis thaliana (Mouse-ear cress), this protein is Peroxidase 55 (PER55).